A 217-amino-acid chain; its full sequence is Ras-like protein (217 aa).

17 to 24 (GGGGVGKS) provides a ligand contact to GTP. The short motif at 39–47 (YDPTIEDSY) is the Effector region element. Residues 64-68 (DTAGQ) and 123-126 (NKCD) each bind GTP. A disordered region spans residues 181-200 (TGRMMTGGGGGGPPGTYAGK). Residues 185 to 194 (MTGGGGGGPP) show a composition bias toward gly residues. S-palmitoyl cysteine attachment occurs at residues C210 and C211. C214 carries the cysteine methyl ester modification. The S-geranylgeranyl cysteine moiety is linked to residue C214. Residues 215-217 (VVL) constitute a propeptide, removed in mature form.

The protein belongs to the small GTPase superfamily. Ras family.

It localises to the cell membrane. It carries out the reaction GTP + H2O = GDP + phosphate + H(+). With respect to regulation, alternates between an inactive form bound to GDP and an active form bound to GTP. Activated by a guanine nucleotide-exchange factor (GEF) and inactivated by a GTPase-activating protein (GAP). The sequence is that of Ras-like protein from Lentinula edodes (Shiitake mushroom).